The chain runs to 364 residues: Anhydro-N-acetylmuramic acid kinase (364 aa).

ATP is bound at residue 12-19 (GTSHDAID).

This sequence belongs to the anhydro-N-acetylmuramic acid kinase family.

It carries out the reaction 1,6-anhydro-N-acetyl-beta-muramate + ATP + H2O = N-acetyl-D-muramate 6-phosphate + ADP + H(+). It participates in amino-sugar metabolism; 1,6-anhydro-N-acetylmuramate degradation. The protein operates within cell wall biogenesis; peptidoglycan recycling. Catalyzes the specific phosphorylation of 1,6-anhydro-N-acetylmuramic acid (anhMurNAc) with the simultaneous cleavage of the 1,6-anhydro ring, generating MurNAc-6-P. Is required for the utilization of anhMurNAc either imported from the medium or derived from its own cell wall murein, and thus plays a role in cell wall recycling. This is Anhydro-N-acetylmuramic acid kinase from Gamma-proteobacterium EBAC31A08.